A 242-amino-acid chain; its full sequence is Glucosamine-6-phosphate deaminase (242 aa).

Asp67 serves as the catalytic Proton acceptor; for enolization step. Asn136 (for ring-opening step) is an active-site residue. His138 (proton acceptor; for ring-opening step) is an active-site residue. The active-site For ring-opening step is Glu143.

Belongs to the glucosamine/galactosamine-6-phosphate isomerase family. NagB subfamily.

The catalysed reaction is alpha-D-glucosamine 6-phosphate + H2O = beta-D-fructose 6-phosphate + NH4(+). The protein operates within amino-sugar metabolism; N-acetylneuraminate degradation; D-fructose 6-phosphate from N-acetylneuraminate: step 5/5. Functionally, catalyzes the reversible isomerization-deamination of glucosamine 6-phosphate (GlcN6P) to form fructose 6-phosphate (Fru6P) and ammonium ion. This Clostridium perfringens (strain ATCC 13124 / DSM 756 / JCM 1290 / NCIMB 6125 / NCTC 8237 / Type A) protein is Glucosamine-6-phosphate deaminase.